Reading from the N-terminus, the 673-residue chain is tRNA 5-methylaminomethyl-2-thiouridine biosynthesis bifunctional protein MnmC (673 aa).

A tRNA (mnm(5)s(2)U34)-methyltransferase region spans residues 1–245 (MSHAPIQTAA…KREMLIGELP (245 aa)). Residues 272–673 (IGGGVASALT…VRKLLKGRAV (402 aa)) form an FAD-dependent cmnm(5)s(2)U34 oxidoreductase region.

It in the N-terminal section; belongs to the methyltransferase superfamily. tRNA (mnm(5)s(2)U34)-methyltransferase family. This sequence in the C-terminal section; belongs to the DAO family. Requires FAD as cofactor.

The protein resides in the cytoplasm. It carries out the reaction 5-aminomethyl-2-thiouridine(34) in tRNA + S-adenosyl-L-methionine = 5-methylaminomethyl-2-thiouridine(34) in tRNA + S-adenosyl-L-homocysteine + H(+). In terms of biological role, catalyzes the last two steps in the biosynthesis of 5-methylaminomethyl-2-thiouridine (mnm(5)s(2)U) at the wobble position (U34) in tRNA. Catalyzes the FAD-dependent demodification of cmnm(5)s(2)U34 to nm(5)s(2)U34, followed by the transfer of a methyl group from S-adenosyl-L-methionine to nm(5)s(2)U34, to form mnm(5)s(2)U34. In Serratia proteamaculans (strain 568), this protein is tRNA 5-methylaminomethyl-2-thiouridine biosynthesis bifunctional protein MnmC.